A 260-amino-acid polypeptide reads, in one-letter code: (R)-2-hydroxyglutaryl-CoA dehydratase activating ATPase (260 aa).

12-16 (STASK) is a binding site for ATP. Positions 127 and 166 each coordinate [4Fe-4S] cluster. 2 residues coordinate ATP: Gln-220 and Gln-243.

This sequence belongs to the HgdC family. Homodimer. It depends on [4Fe-4S] cluster as a cofactor. Requires Mg(2+) as cofactor.

The catalysed reaction is ATP + H2O = ADP + phosphate + H(+). It functions in the pathway amino-acid degradation; L-glutamate degradation via hydroxyglutarate pathway; crotonoyl-CoA from L-glutamate: step 4/5. Its activity is regulated as follows. Inactivated by exposure to air within less than 15 minutes. Its function is as follows. Involved in the fermentation of L-glutamate via the hydroxyglutarate pathway. HgdC (CompA) has a very low ATPase activity, whose the role is to activate dehydratase HgdA-HgdB complex and then maintain an appropriate redox state via an ATP-dependent electron transfer. The dehydratase requires only catalytic amounts of ATP and substoichiometric amounts of HgdC (CompA) to be functional. The polypeptide is (R)-2-hydroxyglutaryl-CoA dehydratase activating ATPase (Acidaminococcus fermentans (strain ATCC 25085 / DSM 20731 / CCUG 9996 / CIP 106432 / VR4)).